Here is a 266-residue protein sequence, read N- to C-terminus: MNKVKVGDAQVSYCIDGKGPGLVLVHGTGGDSETNWGHLMPALTNDWTVVRPDYSGSGITSDEGKQLEVKEIAAQVVAAAEAARVVPFDLVGFSLGSAVVIAIAADYPHLVRRIVLLGAFLSSRDIRQKTQFELWRDLIRTDRAALSRLILLTGFSPDFISKQGHDGVSVIINSFVSEINWEGMARQVELDLSIDVSEAARRIEKPTLVIGCSHDHIVPSSQAKSVVRIIRGAQYTELHTGHLAHIENPEEFILLLRSFLLSEDVP.

Threonine 28 contacts acetate. Residue serine 94 is the Nucleophile of the active site. Residue leucine 95 participates in acetate binding. Catalysis depends on charge relay system residues aspartate 215 and histidine 242. Residue histidine 242 participates in acetate binding.

The protein belongs to the AB hydrolase superfamily. As to quaternary structure, homodimer.

It catalyses the reaction pyrrolizixenacetamide + H2O = 3-amino-5,6,7,7a-tetrahydro-1H-pyrrolizin-1-one + acetate + H(+). Its function is as follows. Involved in the biosynthetic pathway of pyrrolizwilline, a pyrrolizidine alkaloid. Catalyzes the N-deacetylation of pyrrolizixenacetamide. The chain is Pyrrolizixenacetamide deacetylase from Xenorhabdus hominickii.